Reading from the N-terminus, the 325-residue chain is tRNA(Ile)-lysidine synthase (325 aa).

34–39 (SGGADS) contacts ATP.

This sequence belongs to the tRNA(Ile)-lysidine synthase family.

It localises to the cytoplasm. It catalyses the reaction cytidine(34) in tRNA(Ile2) + L-lysine + ATP = lysidine(34) in tRNA(Ile2) + AMP + diphosphate + H(+). In terms of biological role, ligates lysine onto the cytidine present at position 34 of the AUA codon-specific tRNA(Ile) that contains the anticodon CAU, in an ATP-dependent manner. Cytidine is converted to lysidine, thus changing the amino acid specificity of the tRNA from methionine to isoleucine. The sequence is that of tRNA(Ile)-lysidine synthase from Rhodococcus erythropolis (strain PR4 / NBRC 100887).